Consider the following 294-residue polypeptide: tRNA pseudouridine synthase B (294 aa).

D38 (nucleophile) is an active-site residue.

This sequence belongs to the pseudouridine synthase TruB family. Type 1 subfamily.

The catalysed reaction is uridine(55) in tRNA = pseudouridine(55) in tRNA. Its function is as follows. Responsible for synthesis of pseudouridine from uracil-55 in the psi GC loop of transfer RNAs. The polypeptide is tRNA pseudouridine synthase B (Clostridium perfringens (strain ATCC 13124 / DSM 756 / JCM 1290 / NCIMB 6125 / NCTC 8237 / Type A)).